Here is a 330-residue protein sequence, read N- to C-terminus: Ferredoxin--NADP reductase (330 aa).

The FAD site is built by Glu-35, Gln-43, Tyr-48, Val-90, Phe-123, Asp-285, and Thr-326.

This sequence belongs to the ferredoxin--NADP reductase type 2 family. As to quaternary structure, homodimer. Requires FAD as cofactor.

It catalyses the reaction 2 reduced [2Fe-2S]-[ferredoxin] + NADP(+) + H(+) = 2 oxidized [2Fe-2S]-[ferredoxin] + NADPH. The chain is Ferredoxin--NADP reductase from Streptococcus pyogenes serotype M3 (strain ATCC BAA-595 / MGAS315).